Reading from the N-terminus, the 559-residue chain is 2-succinyl-5-enolpyruvyl-6-hydroxy-3-cyclohexene-1-carboxylate synthase (559 aa).

It belongs to the TPP enzyme family. MenD subfamily. In terms of assembly, homodimer. Mg(2+) is required as a cofactor. Mn(2+) serves as cofactor. The cofactor is thiamine diphosphate.

It carries out the reaction isochorismate + 2-oxoglutarate + H(+) = 5-enolpyruvoyl-6-hydroxy-2-succinyl-cyclohex-3-ene-1-carboxylate + CO2. It functions in the pathway quinol/quinone metabolism; 1,4-dihydroxy-2-naphthoate biosynthesis; 1,4-dihydroxy-2-naphthoate from chorismate: step 2/7. Its pathway is quinol/quinone metabolism; menaquinone biosynthesis. Functionally, catalyzes the thiamine diphosphate-dependent decarboxylation of 2-oxoglutarate and the subsequent addition of the resulting succinic semialdehyde-thiamine pyrophosphate anion to isochorismate to yield 2-succinyl-5-enolpyruvyl-6-hydroxy-3-cyclohexene-1-carboxylate (SEPHCHC). This is 2-succinyl-5-enolpyruvyl-6-hydroxy-3-cyclohexene-1-carboxylate synthase from Cytophaga hutchinsonii (strain ATCC 33406 / DSM 1761 / CIP 103989 / NBRC 15051 / NCIMB 9469 / D465).